Consider the following 228-residue polypeptide: Protein K8.1 (228 aa).

Residues methionine 1 to alanine 26 form the signal peptide. 4 N-linked (GlcNAc...) asparagine; by host glycosylation sites follow: asparagine 55, asparagine 60, asparagine 70, and asparagine 85. Positions glycine 77 to arginine 113 are disordered. Over residues serine 78–glycine 97 the composition is skewed to polar residues. A helical transmembrane segment spans residues leucine 197 to valine 217.

The protein resides in the host membrane. This Human herpesvirus 8 type P (isolate GK18) (HHV-8) protein is Protein K8.1 (K8.1).